An 84-amino-acid polypeptide reads, in one-letter code: Beta/gamma-crystallin (84 aa).

2 consecutive Beta/gamma crystallin 'Greek key' domains span residues 2-42 and 43-84; these read GKII…IVES and GTWF…VKQQ. Residues 64–84 form a disordered region; the sequence is KYPNPGSWGGNDDELSSVKQQ.

The protein belongs to the beta/gamma-crystallin family. As to quaternary structure, monomer. As to expression, palps of larvae and otolith of the light-sensing ocellus.

Its function is as follows. Structural component of the neuroectodermal visual system. The chain is Beta/gamma-crystallin from Ciona intestinalis (Transparent sea squirt).